The primary structure comprises 488 residues: Argininosuccinate lyase 2 (488 aa).

Belongs to the lyase 1 family. Argininosuccinate lyase subfamily.

It is found in the cytoplasm. The catalysed reaction is 2-(N(omega)-L-arginino)succinate = fumarate + L-arginine. Its pathway is amino-acid biosynthesis; L-arginine biosynthesis; L-arginine from L-ornithine and carbamoyl phosphate: step 3/3. The chain is Argininosuccinate lyase 2 from Rhizobium meliloti (strain 1021) (Ensifer meliloti).